The sequence spans 125 residues: Holo-[acyl-carrier-protein] synthase (125 aa).

Asp8 and Glu60 together coordinate Mg(2+).

Belongs to the P-Pant transferase superfamily. AcpS family. Mg(2+) serves as cofactor.

Its subcellular location is the cytoplasm. It carries out the reaction apo-[ACP] + CoA = holo-[ACP] + adenosine 3',5'-bisphosphate + H(+). Transfers the 4'-phosphopantetheine moiety from coenzyme A to a Ser of acyl-carrier-protein. The sequence is that of Holo-[acyl-carrier-protein] synthase from Wolbachia sp. subsp. Brugia malayi (strain TRS).